Reading from the N-terminus, the 414-residue chain is Probable tRNA pseudouridine synthase D (414 aa).

The Nucleophile role is filled by aspartate 90. The TRUD domain occupies 162-382 (GFPNFFGVQR…SSGDYRIISA (221 aa)).

This sequence belongs to the pseudouridine synthase TruD family.

The catalysed reaction is uridine(13) in tRNA = pseudouridine(13) in tRNA. Could be responsible for synthesis of pseudouridine from uracil-13 in transfer RNAs. This chain is Probable tRNA pseudouridine synthase D, found in Picrophilus torridus (strain ATCC 700027 / DSM 9790 / JCM 10055 / NBRC 100828 / KAW 2/3).